The following is a 238-amino-acid chain: Probable transcriptional regulatory protein YeeN (238 aa).

This sequence belongs to the TACO1 family. YeeN subfamily.

Its subcellular location is the cytoplasm. The sequence is that of Probable transcriptional regulatory protein YeeN from Shigella sonnei (strain Ss046).